A 348-amino-acid polypeptide reads, in one-letter code: N6-Methyl-AMP deaminase (348 aa).

Positions 18 and 20 each coordinate Zn(2+). N(6)-methyl-AMP is bound by residues histidine 20, asparagine 22, histidine 68, 100–103 (STPR), aspartate 142, and glycine 175. Histidine 202 contacts Zn(2+). Residues glutamate 205, aspartate 287, and aspartate 288 each contribute to the N(6)-methyl-AMP site. Glutamate 205 acts as the Proton donor in catalysis. A Zn(2+)-binding site is contributed by aspartate 287.

This sequence belongs to the metallo-dependent hydrolases superfamily. Adenosine and AMP deaminases family. As to quaternary structure, monomer. The cofactor is Zn(2+).

The enzyme catalyses N(6)-methyl-AMP + H2O + H(+) = IMP + methylamine. Catalyzes the hydrolysis of the free cytosolic methylated adenosine nucleotide N(6)-methyl-AMP (N6-mAMP) to produce inositol monophosphate (IMP) and methylamine. Is required for the catabolism of cytosolic N6-mAMP, which is derived from the degradation of mRNA containing N6-methylated adenine (m6A). The protein is N6-Methyl-AMP deaminase (mapda) of Danio rerio (Zebrafish).